We begin with the raw amino-acid sequence, 184 residues long: Photosystem I assembly protein Ycf3 (184 aa).

TPR repeat units follow at residues Ala31 to Gln64, Ser68 to Leu101, and Met131 to Asn164.

This sequence belongs to the Ycf3 family.

The protein localises to the plastid. It is found in the chloroplast thylakoid membrane. Functionally, essential for the assembly of the photosystem I (PSI) complex. May act as a chaperone-like factor to guide the assembly of the PSI subunits. This chain is Photosystem I assembly protein Ycf3, found in Thalassiosira pseudonana (Marine diatom).